We begin with the raw amino-acid sequence, 90 residues long: uncharacterized protein (90 aa).

The first 20 residues, 1–20 (MAYKMLQVVLCSTLLIGALG), serve as a signal peptide directing secretion.

This is an uncharacterized protein from Homo sapiens (Human).